A 1548-amino-acid chain; its full sequence is UDP-glucose:glycoprotein glucosyltransferase (1548 aa).

An N-terminal signal peptide occupies residues 1–22 (MLRAVALCVSVVLIALYTPTSG). N181 is a glycosylation site (N-linked (GlcNAc...) asparagine). Over residues 243 to 253 (TEYKSQDDAPK) the composition is skewed to basic and acidic residues. Residues 243 to 265 (TEYKSQDDAPKPEAGSTSDEDLA) form a disordered region. Residues N266 and N864 are each glycosylated (N-linked (GlcNAc...) asparagine). The segment at 1227–1548 (SANQAATDED…PSHEPKHGEL (322 aa)) is glucosyltransferase. Positions 1512–1523 (EDHENSHSRDSA) are enriched in basic and acidic residues. The segment at 1512-1548 (EDHENSHSRDSAVDDSVDDSVEVTTVTPSHEPKHGEL) is disordered. The Prevents secretion from ER motif lies at 1545–1548 (HGEL).

Belongs to the glycosyltransferase 8 family. In terms of assembly, monomer. May interact with CG7484/Sep15. Requires Ca(2+) as cofactor. It depends on Mn(2+) as a cofactor.

The protein localises to the endoplasmic reticulum lumen. It localises to the endoplasmic reticulum-Golgi intermediate compartment. The catalysed reaction is N(4)-(alpha-D-Man-(1-&gt;2)-alpha-D-Man-(1-&gt;2)-alpha-D-Man-(1-&gt;3)-[alpha-D-Man-(1-&gt;2)-alpha-D-Man-(1-&gt;3)-[alpha-D-Man-(1-&gt;2)-alpha-D-Man-(1-&gt;6)]-alpha-D-Man-(1-&gt;6)]-beta-D-Man-(1-&gt;4)-beta-D-GlcNAc-(1-&gt;4)-beta-D-GlcNAc)-L-asparaginyl-[protein] (N-glucan mannose isomer 9A1,2,3B1,2,3) + UDP-alpha-D-glucose = N(4)-(alpha-D-Glc-(1-&gt;3)-alpha-D-Man-(1-&gt;2)-alpha-D-Man-(1-&gt;2)-alpha-D-Man-(1-&gt;3)-[alpha-D-Man-(1-&gt;2)-alpha-D-Man-(1-&gt;3)-[alpha-D-Man-(1-&gt;2)-alpha-D-Man-(1-&gt;6)]-alpha-D-Man-(1-&gt;6)]-beta-D-Man-(1-&gt;4)-beta-D-GlcNAc-(1-&gt;4)-beta-D-GlcNAc)-L-asparaginyl-[protein] + UDP + H(+). The protein operates within protein modification; protein glycosylation. In terms of biological role, recognizes glycoproteins with minor folding defects. Reglucosylates single N-glycans near the misfolded part of the protein, thus providing quality control for protein folding in the endoplasmic reticulum. Reglucosylated proteins are recognized by calreticulin for recycling to the endoplasmic reticulum and refolding or degradation. The polypeptide is UDP-glucose:glycoprotein glucosyltransferase (Drosophila melanogaster (Fruit fly)).